We begin with the raw amino-acid sequence, 387 residues long: Phosphoglycerate kinase (387 aa).

Residues aspartate 21–asparagine 23, arginine 36, histidine 59–arginine 62, arginine 113, and arginine 146 contribute to the substrate site. ATP is bound by residues lysine 197, glutamate 314, and glycine 340–threonine 343.

It belongs to the phosphoglycerate kinase family. Monomer.

It is found in the cytoplasm. The catalysed reaction is (2R)-3-phosphoglycerate + ATP = (2R)-3-phospho-glyceroyl phosphate + ADP. It functions in the pathway carbohydrate degradation; glycolysis; pyruvate from D-glyceraldehyde 3-phosphate: step 2/5. The polypeptide is Phosphoglycerate kinase (Sodalis glossinidius (strain morsitans)).